Consider the following 247-residue polypeptide: Coproheme decarboxylase (247 aa).

Residues Arg-129, 143–147, His-170, Gln-183, and Ser-221 contribute to the Fe-coproporphyrin III site; that span reads YPMDK. Tyr-143 is an active-site residue.

This sequence belongs to the ChdC family. Type 1 subfamily. Fe-coproporphyrin III serves as cofactor.

It carries out the reaction Fe-coproporphyrin III + 2 H2O2 + 2 H(+) = heme b + 2 CO2 + 4 H2O. The enzyme catalyses Fe-coproporphyrin III + H2O2 + H(+) = harderoheme III + CO2 + 2 H2O. The catalysed reaction is harderoheme III + H2O2 + H(+) = heme b + CO2 + 2 H2O. It functions in the pathway porphyrin-containing compound metabolism; protoheme biosynthesis. Its function is as follows. Involved in coproporphyrin-dependent heme b biosynthesis. Catalyzes the decarboxylation of Fe-coproporphyrin III (coproheme) to heme b (protoheme IX), the last step of the pathway. The reaction occurs in a stepwise manner with a three-propionate intermediate. This Bacillus cytotoxicus (strain DSM 22905 / CIP 110041 / 391-98 / NVH 391-98) protein is Coproheme decarboxylase.